The chain runs to 81 residues: Photosystem I iron-sulfur center (81 aa).

4Fe-4S ferredoxin-type domains lie at serine 2–tryptophan 31 and isoleucine 39–tyrosine 68. Cysteine 11, cysteine 14, cysteine 17, cysteine 21, cysteine 48, cysteine 51, cysteine 54, and cysteine 58 together coordinate [4Fe-4S] cluster.

The cyanobacterial PSI reaction center is composed of one copy each of PsaA,B,C,D,E,F,I,J,K,L,M and X, and forms trimeric complexes. Requires [4Fe-4S] cluster as cofactor.

The protein resides in the cellular thylakoid membrane. The catalysed reaction is reduced [plastocyanin] + hnu + oxidized [2Fe-2S]-[ferredoxin] = oxidized [plastocyanin] + reduced [2Fe-2S]-[ferredoxin]. Its function is as follows. Apoprotein for the two 4Fe-4S centers FA and FB of photosystem I (PSI); essential for photochemical activity. FB is the terminal electron acceptor of PSI, donating electrons to ferredoxin. The C-terminus interacts with PsaA/B/D and helps assemble the protein into the PSI complex. Required for binding of PsaD and PsaE to PSI. PSI is a plastocyanin/cytochrome c6-ferredoxin oxidoreductase, converting photonic excitation into a charge separation, which transfers an electron from the donor P700 chlorophyll pair to the spectroscopically characterized acceptors A0, A1, FX, FA and FB in turn. This Prochlorococcus marinus (strain MIT 9312) protein is Photosystem I iron-sulfur center.